A 233-amino-acid polypeptide reads, in one-letter code: Zinc import ATP-binding protein ZnuC (233 aa).

Positions 6-222 (IEFRNVSKKF…SEFSNALSAL (217 aa)) constitute an ABC transporter domain. Residue 38–45 (GPNGAGKT) participates in ATP binding.

This sequence belongs to the ABC transporter superfamily. Zinc importer (TC 3.A.1.15.5) family. As to quaternary structure, the complex is composed of two ATP-binding proteins (ZnuC), two transmembrane proteins (ZnuB) and a solute-binding protein (ZnuA).

The protein localises to the cell inner membrane. The catalysed reaction is Zn(2+)(out) + ATP(in) + H2O(in) = Zn(2+)(in) + ADP(in) + phosphate(in) + H(+)(in). Functionally, part of the ABC transporter complex ZnuABC involved in zinc import. Responsible for energy coupling to the transport system. The chain is Zinc import ATP-binding protein ZnuC from Rickettsia conorii (strain ATCC VR-613 / Malish 7).